Reading from the N-terminus, the 403-residue chain is Argininosuccinate synthase (403 aa).

Residues 12–20 (AYSGGLDTS) and Ala39 each bind ATP. Tyr91 lines the L-citrulline pocket. Residue Gly121 coordinates ATP. The L-aspartate site is built by Thr123, Asn127, and Asp128. Position 127 (Asn127) interacts with L-citrulline. L-citrulline is bound by residues Arg131, Ser180, Ser189, Glu265, and Tyr277.

This sequence belongs to the argininosuccinate synthase family. Type 1 subfamily. As to quaternary structure, homotetramer.

The protein localises to the cytoplasm. The enzyme catalyses L-citrulline + L-aspartate + ATP = 2-(N(omega)-L-arginino)succinate + AMP + diphosphate + H(+). The protein operates within amino-acid biosynthesis; L-arginine biosynthesis; L-arginine from L-ornithine and carbamoyl phosphate: step 2/3. This is Argininosuccinate synthase from Buchnera aphidicola subsp. Acyrthosiphon pisum (strain 5A).